Here is a 315-residue protein sequence, read N- to C-terminus: N-acetyl-gamma-glutamyl-phosphate reductase (315 aa).

Cys117 is an active-site residue.

Belongs to the NAGSA dehydrogenase family. Type 2 subfamily.

It localises to the cytoplasm. The catalysed reaction is N-acetyl-L-glutamate 5-semialdehyde + phosphate + NADP(+) = N-acetyl-L-glutamyl 5-phosphate + NADPH + H(+). Its pathway is amino-acid biosynthesis; L-arginine biosynthesis; N(2)-acetyl-L-ornithine from L-glutamate: step 3/4. Its function is as follows. Catalyzes the NADPH-dependent reduction of N-acetyl-5-glutamyl phosphate to yield N-acetyl-L-glutamate 5-semialdehyde. The polypeptide is N-acetyl-gamma-glutamyl-phosphate reductase (Burkholderia ambifaria (strain ATCC BAA-244 / DSM 16087 / CCUG 44356 / LMG 19182 / AMMD) (Burkholderia cepacia (strain AMMD))).